We begin with the raw amino-acid sequence, 360 residues long: RGG repeats nuclear RNA binding protein B (360 aa).

Disordered stretches follow at residues 1-216 (MASV…DKEM) and 250-360 (MQQL…TLGK). Ala-2 is modified (N-acetylalanine). Gly residues predominate over residues 58-77 (PGGGRGAGRGGSYGRGGRGG). 2 stretches are compositionally biased toward basic and acidic residues: residues 99–108 (RRSEEGDGAR) and 132–157 (DSER…RDGA). Positions 162–176 (WGTTQDDITPVTEES) are enriched in polar residues. Composition is skewed to basic and acidic residues over residues 184–216 (LTVE…DKEM), 258–283 (SNND…EKTR), and 311–336 (REGR…RNQR). Residues 223–288 (KVLEEKKKAL…EEKTRKSLSI (66 aa)) enclose the FF domain. Ser-258 is modified (phosphoserine).

It belongs to the SERBP1-HABP4 family.

The protein resides in the nucleus. The protein localises to the cytoplasm. It is found in the perinuclear region. In terms of biological role, ribosome-binding protein that acts as a regulator of mRNA translation by promoting ribosome inactivation. Binds RNA. The polypeptide is RGG repeats nuclear RNA binding protein B (Arabidopsis thaliana (Mouse-ear cress)).